The following is a 161-amino-acid chain: Peptidyl-prolyl cis-trans isomerase-like 1 (161 aa).

The region spanning 1–155 (MATDVAFDTS…DEVKIIRARV (155 aa)) is the PPIase cyclophilin-type domain.

This sequence belongs to the cyclophilin-type PPIase family. PPIL1 subfamily.

It carries out the reaction [protein]-peptidylproline (omega=180) = [protein]-peptidylproline (omega=0). Functionally, PPIases accelerate the folding of proteins. It catalyzes the cis-trans isomerization of proline imidic peptide bonds in oligopeptides. The sequence is that of Peptidyl-prolyl cis-trans isomerase-like 1 (cyp1) from Aspergillus oryzae (strain ATCC 42149 / RIB 40) (Yellow koji mold).